We begin with the raw amino-acid sequence, 570 residues long: Sulfite reductase [NADPH] hemoprotein beta-component (570 aa).

The [4Fe-4S] cluster site is built by Cys-434, Cys-440, Cys-479, and Cys-483. Cys-483 contacts siroheme.

It belongs to the nitrite and sulfite reductase 4Fe-4S domain family. In terms of assembly, alpha(8)-beta(8). The alpha component is a flavoprotein, the beta component is a hemoprotein. It depends on siroheme as a cofactor. Requires [4Fe-4S] cluster as cofactor.

The catalysed reaction is hydrogen sulfide + 3 NADP(+) + 3 H2O = sulfite + 3 NADPH + 4 H(+). It functions in the pathway sulfur metabolism; hydrogen sulfide biosynthesis; hydrogen sulfide from sulfite (NADPH route): step 1/1. In terms of biological role, component of the sulfite reductase complex that catalyzes the 6-electron reduction of sulfite to sulfide. This is one of several activities required for the biosynthesis of L-cysteine from sulfate. The protein is Sulfite reductase [NADPH] hemoprotein beta-component of Salmonella schwarzengrund (strain CVM19633).